The primary structure comprises 263 residues: Pimeloyl-[acyl-carrier protein] methyl ester esterase (263 aa).

Residues tryptophan 28, 86–87 (SL), and 149–153 (FLAIQ) contribute to the substrate site. Catalysis depends on serine 86, which acts as the Nucleophile. Residues aspartate 213 and histidine 240 contribute to the active site. Substrate is bound at residue histidine 240.

This sequence belongs to the AB hydrolase superfamily. Carboxylesterase BioH family. Monomer.

The protein resides in the cytoplasm. It catalyses the reaction 6-carboxyhexanoyl-[ACP] methyl ester + H2O = 6-carboxyhexanoyl-[ACP] + methanol + H(+). It participates in cofactor biosynthesis; biotin biosynthesis. Functionally, the physiological role of BioH is to remove the methyl group introduced by BioC when the pimeloyl moiety is complete. It allows to synthesize pimeloyl-ACP via the fatty acid synthetic pathway through the hydrolysis of the ester bonds of pimeloyl-ACP esters. The protein is Pimeloyl-[acyl-carrier protein] methyl ester esterase of Shewanella oneidensis (strain ATCC 700550 / JCM 31522 / CIP 106686 / LMG 19005 / NCIMB 14063 / MR-1).